We begin with the raw amino-acid sequence, 447 residues long: Chromosomal replication initiator protein DnaA (447 aa).

Residues 1–70 (MQDFWSKAMD…EEILSEQLGE (70 aa)) are domain I, interacts with DnaA modulators. The tract at residues 70 to 110 (EPVTLLFAADPALEKPVASKTQTVTPVQSGGETGDQENFHS) is domain II. A disordered region spans residues 87 to 109 (ASKTQTVTPVQSGGETGDQENFH). Over residues 88-99 (SKTQTVTPVQSG) the composition is skewed to polar residues. Residues 111–327 (GLDPRYTFDS…GALIRVSAYA (217 aa)) are domain III, AAA+ region. The ATP site is built by Gly155, Gly157, Lys158, and Thr159. Positions 328–447 (SLTGKPITMA…LASLKSMLQK (120 aa)) are domain IV, binds dsDNA.

It belongs to the DnaA family. As to quaternary structure, oligomerizes as a right-handed, spiral filament on DNA at oriC.

It localises to the cytoplasm. Plays an essential role in the initiation and regulation of chromosomal replication. ATP-DnaA binds to the origin of replication (oriC) to initiate formation of the DNA replication initiation complex once per cell cycle. Binds the DnaA box (a 9 base pair repeat at the origin) and separates the double-stranded (ds)DNA. Forms a right-handed helical filament on oriC DNA; dsDNA binds to the exterior of the filament while single-stranded (ss)DNA is stabiized in the filament's interior. The ATP-DnaA-oriC complex binds and stabilizes one strand of the AT-rich DNA unwinding element (DUE), permitting loading of DNA polymerase. After initiation quickly degrades to an ADP-DnaA complex that is not apt for DNA replication. Binds acidic phospholipids. The protein is Chromosomal replication initiator protein DnaA of Magnetococcus marinus (strain ATCC BAA-1437 / JCM 17883 / MC-1).